Here is a 386-residue protein sequence, read N- to C-terminus: 8-amino-7-oxononanoate synthase (386 aa).

Arg-20 serves as a coordination point for substrate. 107–108 is a binding site for pyridoxal 5'-phosphate; that stretch reads GY. Residue His-132 participates in substrate binding. The pyridoxal 5'-phosphate site is built by Ser-178, His-206, and Thr-234. The residue at position 237 (Lys-237) is an N6-(pyridoxal phosphate)lysine. Substrate is bound at residue Thr-351.

It belongs to the class-II pyridoxal-phosphate-dependent aminotransferase family. BioF subfamily. In terms of assembly, homodimer. Requires pyridoxal 5'-phosphate as cofactor.

The catalysed reaction is 6-carboxyhexanoyl-[ACP] + L-alanine + H(+) = (8S)-8-amino-7-oxononanoate + holo-[ACP] + CO2. Its pathway is cofactor biosynthesis; biotin biosynthesis. Functionally, catalyzes the decarboxylative condensation of pimeloyl-[acyl-carrier protein] and L-alanine to produce 8-amino-7-oxononanoate (AON), [acyl-carrier protein], and carbon dioxide. The polypeptide is 8-amino-7-oxononanoate synthase (Aromatoleum aromaticum (strain DSM 19018 / LMG 30748 / EbN1) (Azoarcus sp. (strain EbN1))).